The primary structure comprises 183 residues: Ribosome maturation factor RimM (183 aa).

Residues 104-183 (EGDYYWKDLI…TIEVDWDPGF (80 aa)) enclose the PRC barrel domain.

This sequence belongs to the RimM family. As to quaternary structure, binds ribosomal protein uS19.

Its subcellular location is the cytoplasm. Its function is as follows. An accessory protein needed during the final step in the assembly of 30S ribosomal subunit, possibly for assembly of the head region. Essential for efficient processing of 16S rRNA. May be needed both before and after RbfA during the maturation of 16S rRNA. It has affinity for free ribosomal 30S subunits but not for 70S ribosomes. The protein is Ribosome maturation factor RimM of Cronobacter sakazakii (strain ATCC BAA-894) (Enterobacter sakazakii).